Reading from the N-terminus, the 4981-residue chain is Protocadherin Fat 4 (4981 aa).

A signal peptide spans Met-1 to Ala-42. Residues Ala-43 to Ala-4505 lie on the Extracellular side of the membrane. Cadherin domains follow at residues Glu-44 to Phe-135, Pro-136 to Phe-250, Gly-251 to Val-353, Pro-359 to Phe-475, Glu-476 to Phe-582, Gln-584 to Phe-689, Tyr-690 to Phe-793, Ser-794 to Phe-893, Leu-894 to Phe-996, Asp-997 to Phe-1100, Asn-1101 to Phe-1210, Leu-1211 to Phe-1315, Pro-1316 to Phe-1420, Pro-1421 to Phe-1529, Phe-1529 to Phe-1629, Thr-1630 to Phe-1740, Pro-1741 to Phe-1841, Ser-1842 to Phe-1944, Ser-1945 to Phe-2051, Phe-2051 to Phe-2154, Ala-2155 to Phe-2259, Glu-2260 to Phe-2364, Ala-2365 to Phe-2468, Gln-2469 to Val-2569, Arg-2570 to Phe-2671, Glu-2672 to Phe-2775, Phe-2775 to Phe-2874, Ser-2875 to Phe-2985, Leu-2986 to Phe-3091, Ser-3092 to Phe-3196, Val-3197 to Phe-3300, Val-3301 to Phe-3406, Ser-3407 to Leu-3512, and Val-3511 to Phe-3622. N-linked (GlcNAc...) asparagine glycans are attached at residues Asn-84 and Asn-237. N-linked (GlcNAc...) asparagine glycans are attached at residues Asn-393, Asn-416, Asn-435, Asn-483, Asn-551, Asn-615, Asn-676, Asn-721, Asn-825, Asn-880, Asn-948, Asn-1085, Asn-1101, Asn-1104, Asn-1225, Asn-1296, Asn-1389, and Asn-1514. 4 N-linked (GlcNAc...) asparagine glycosylation sites follow: Asn-1828, Asn-1899, Asn-1967, and Asn-2119. N-linked (GlcNAc...) asparagine glycans are attached at residues Asn-2387 and Asn-2432. 7 N-linked (GlcNAc...) asparagine glycosylation sites follow: Asn-2923, Asn-2939, Asn-3038, Asn-3142, Asn-3219, Asn-3394, and Asn-3479. 2 N-linked (GlcNAc...) asparagine glycosylation sites follow: Asn-3708 and Asn-3760. Residues Asp-3804–Glu-3862 form the EGF-like 1 domain. 12 disulfide bridges follow: Cys-3808–Cys-3819, Cys-3813–Cys-3850, Cys-3852–Cys-3861, Cys-3868–Cys-3879, Cys-3873–Cys-3888, Cys-3890–Cys-3899, Cys-3906–Cys-3917, Cys-3911–Cys-3926, Cys-3928–Cys-3937, Cys-3944–Cys-3955, Cys-3949–Cys-3964, and Cys-3966–Cys-3975. An EGF-like 2; calcium-binding domain is found at Asp-3864–Glu-3900. The EGF-like 3; calcium-binding domain occupies Asp-3902 to Glu-3938. The EGF-like 4 domain maps to Ser-3940–Glu-3976. The Laminin G-like 1 domain maps to Leu-3977 to Cys-4161. Asn-4019 carries an N-linked (GlcNAc...) asparagine glycan. 4 disulfide bridges follow: Cys-4135–Cys-4161, Cys-4168–Cys-4179, Cys-4173–Cys-4188, and Cys-4190–Cys-4199. In terms of domain architecture, EGF-like 5 spans Leu-4164–Glu-4200. Residues Tyr-4219–Cys-4399 enclose the Laminin G-like 2 domain. 2 N-linked (GlcNAc...) asparagine glycosylation sites follow: Asn-4269 and Asn-4314. 4 cysteine pairs are disulfide-bonded: Cys-4366–Cys-4399, Cys-4431–Cys-4442, Cys-4436–Cys-4452, and Cys-4454–Cys-4463. The 38-residue stretch at Pro-4427–Glu-4464 folds into the EGF-like 6 domain. A helical membrane pass occupies residues Val-4506 to Leu-4526. Residues Cys-4527–Val-4981 are Cytoplasmic-facing. Disordered stretches follow at residues Pro-4535–Ile-4585, Pro-4677–Ala-4713, Arg-4753–Lys-4773, Arg-4796–Ala-4911, and Ala-4957–Val-4981. Polar residues predominate over residues Pro-4677 to Ser-4701. The interval Phe-4708–Leu-4797 is necessary and sufficient for interaction with MPDZ. Basic and acidic residues predominate over residues Asp-4811–Arg-4823. At Ser-4878 the chain carries Phosphoserine. The segment covering Ala-4971–Val-4981 has biased composition (basic and acidic residues).

In terms of assembly, heterophilic interaction with DCHS1; this interaction affects their respective protein levels. Interacts (via cytoplasmic domain) with MPDZ. Forms a complex with PALS1 and MPDZ. As to expression, widely expressed.

Its subcellular location is the membrane. Cadherins are cell-cell interaction molecules. FAT4 plays a role in the maintenance of planar cell polarity as well as in inhibition of YAP1-mediated neuroprogenitor cell proliferation and differentiation. This Mus musculus (Mouse) protein is Protocadherin Fat 4 (Fat4).